The following is a 370-amino-acid chain: UDP-N-acetylglucosamine--N-acetylmuramyl-(pentapeptide) pyrophosphoryl-undecaprenol N-acetylglucosamine transferase (370 aa).

UDP-N-acetyl-alpha-D-glucosamine-binding positions include 10–12 (TGG), asparagine 124, arginine 166, serine 198, isoleucine 252, and glutamine 297.

Belongs to the glycosyltransferase 28 family. MurG subfamily.

Its subcellular location is the cell membrane. The enzyme catalyses di-trans,octa-cis-undecaprenyl diphospho-N-acetyl-alpha-D-muramoyl-L-alanyl-D-glutamyl-meso-2,6-diaminopimeloyl-D-alanyl-D-alanine + UDP-N-acetyl-alpha-D-glucosamine = di-trans,octa-cis-undecaprenyl diphospho-[N-acetyl-alpha-D-glucosaminyl-(1-&gt;4)]-N-acetyl-alpha-D-muramoyl-L-alanyl-D-glutamyl-meso-2,6-diaminopimeloyl-D-alanyl-D-alanine + UDP + H(+). It functions in the pathway cell wall biogenesis; peptidoglycan biosynthesis. Cell wall formation. Catalyzes the transfer of a GlcNAc subunit on undecaprenyl-pyrophosphoryl-MurNAc-pentapeptide (lipid intermediate I) to form undecaprenyl-pyrophosphoryl-MurNAc-(pentapeptide)GlcNAc (lipid intermediate II). This Finegoldia magna (strain ATCC 29328 / DSM 20472 / WAL 2508) (Peptostreptococcus magnus) protein is UDP-N-acetylglucosamine--N-acetylmuramyl-(pentapeptide) pyrophosphoryl-undecaprenol N-acetylglucosamine transferase.